The chain runs to 271 residues: 5-amino-6-(5-phospho-D-ribitylamino)uracil phosphatase YbjI (271 aa).

Residue Asp-9 is the Nucleophile of the active site. Position 9 (Asp-9) interacts with Mg(2+). Met-10 lines the phosphate pocket. Asp-11 serves as a coordination point for Mg(2+). Residues Ser-44 to Gly-45 and Lys-192 contribute to the phosphate site. Asp-215 contacts Mg(2+). A phosphate-binding site is contributed by Asn-218.

Belongs to the HAD-like hydrolase superfamily. Cof family. Mg(2+) is required as a cofactor. Requires Mn(2+) as cofactor. The cofactor is Co(2+). It depends on Zn(2+) as a cofactor.

It carries out the reaction 5-amino-6-(5-phospho-D-ribitylamino)uracil + H2O = 5-amino-6-(D-ribitylamino)uracil + phosphate. It participates in cofactor biosynthesis; riboflavin biosynthesis; 5-amino-6-(D-ribitylamino)uracil from GTP: step 4/4. In terms of biological role, catalyzes the dephosphorylation of 5-amino-6-(5-phospho-D-ribitylamino)uracil, and thus could be involved in the riboflavin biosynthesis pathway. Is also able to dephosphorylate flavin mononucleotide (FMN), erythrose 4-phosphate and other phosphoric acid esters. This Escherichia coli (strain K12) protein is 5-amino-6-(5-phospho-D-ribitylamino)uracil phosphatase YbjI (ybjI).